Reading from the N-terminus, the 171-residue chain is MLKKPSSLEQWEILGTSSGEFRCISRDCPGAGNNNREPSISTRGRTSSSKMVLPHPKVAEEAVGGPQSCKWLSCGLQGTGGGHLEGHPPRVSQESAPAGHTGISPSSSGVHLIQAKTAGWPQRVSSAEQCLLPIQHVPGADFLHVFTLRLHCGPARNAKLVEALFNSNSSC.

2 disordered regions span residues 27–53 and 82–108; these read DCPG…KMVL and GHLE…PSSS. The span at 32-50 shows a compositional bias: polar residues; sequence GNNNREPSISTRGRTSSSK.

This is an uncharacterized protein from Homo sapiens (Human).